Consider the following 444-residue polypeptide: Biotin carboxylase 2 (444 aa).

A Biotin carboxylation domain is found at Met-1–Leu-444. Residues Lys-116, Lys-158, Gly-164–Gly-165, Glu-200–Ile-203, His-208, and His-235 each bind ATP. The ATP-grasp domain occupies Arg-120–Ala-317. Residue Lys-237 participates in hydrogencarbonate binding. 2 residues coordinate ATP: Glu-275 and Glu-288. Mg(2+) is bound by residues Glu-275, Glu-288, and Asn-290. Glu-275, Glu-288, and Asn-290 together coordinate Mn(2+). The hydrogencarbonate site is built by Arg-292, Val-295, and Arg-338. The active site involves Arg-292. Arg-338 provides a ligand contact to biotin.

In terms of assembly, acetyl-CoA carboxylase is a heterohexamer of biotin carboxyl carrier protein, biotin carboxylase and the two subunits of carboxyl transferase in a 2:2 complex. Mg(2+) is required as a cofactor. The cofactor is Mn(2+).

The catalysed reaction is N(6)-biotinyl-L-lysyl-[protein] + hydrogencarbonate + ATP = N(6)-carboxybiotinyl-L-lysyl-[protein] + ADP + phosphate + H(+). It functions in the pathway lipid metabolism; malonyl-CoA biosynthesis; malonyl-CoA from acetyl-CoA: step 1/1. In terms of biological role, this protein is a component of the acetyl coenzyme A carboxylase complex; first, biotin carboxylase catalyzes the carboxylation of the carrier protein and then the transcarboxylase transfers the carboxyl group to form malonyl-CoA. The sequence is that of Biotin carboxylase 2 (accC2) from Bacillus subtilis (strain 168).